The following is a 494-amino-acid chain: Protein DETOXIFICATION 23 (494 aa).

The disordered stretch occupies residues 1–25; sequence MARREGEVTETLLKKSTENRGEDRD. Transmembrane regions (helical) follow at residues 40–60, 74–94, 123–143, 158–178, 188–208, 223–243, 268–288, 297–317, 340–360, 384–404, 416–436, and 441–461; these read LWVV…LSLI, AAYS…LLGM, IVLT…GPIL, IIAL…TCQM, IIAY…WLLV, LVAH…GGCT, GGMI…TGNL, ALAI…GFMA, MVVV…FLFL, LLAF…VAVG, LACY…VVGL, and VWLG…VMTM.

It belongs to the multi antimicrobial extrusion (MATE) (TC 2.A.66.1) family.

It localises to the membrane. The chain is Protein DETOXIFICATION 23 from Arabidopsis thaliana (Mouse-ear cress).